The following is a 259-amino-acid chain: Hemin import ATP-binding protein HmuV (259 aa).

The ABC transporter domain occupies 2 to 238; sequence IEARDLNVSI…ALLSEVFDCQ (237 aa). An ATP-binding site is contributed by 34–41; that stretch reads GPNGSGKS.

The protein belongs to the ABC transporter superfamily. Heme (hemin) importer (TC 3.A.1.14.5) family. In terms of assembly, the complex is composed of two ATP-binding proteins (HmuV), two transmembrane proteins (HmuU) and a solute-binding protein (HmuT).

It localises to the cell inner membrane. Its function is as follows. Part of the ABC transporter complex HmuTUV involved in hemin import. Responsible for energy coupling to the transport system. The polypeptide is Hemin import ATP-binding protein HmuV (Chelativorans sp. (strain BNC1)).